The following is a 349-amino-acid chain: Protein RecA (349 aa).

65 to 72 (GPESSGKT) contributes to the ATP binding site.

The protein belongs to the RecA family.

It is found in the cytoplasm. Functionally, can catalyze the hydrolysis of ATP in the presence of single-stranded DNA, the ATP-dependent uptake of single-stranded DNA by duplex DNA, and the ATP-dependent hybridization of homologous single-stranded DNAs. It interacts with LexA causing its activation and leading to its autocatalytic cleavage. The protein is Protein RecA of Vibrio vulnificus (strain CMCP6).